A 348-amino-acid polypeptide reads, in one-letter code: Dihydroorotase (348 aa).

Zn(2+) contacts are provided by H17 and H19. Residues 19–21 (HLR) and N45 each bind substrate. Zn(2+)-binding residues include K103, H140, and H178. K103 carries the N6-carboxylysine modification. H140 lines the substrate pocket. L223 is a substrate binding site. D251 contributes to the Zn(2+) binding site. Residue D251 is part of the active site. Residues H255 and A267 each contribute to the substrate site.

Belongs to the metallo-dependent hydrolases superfamily. DHOase family. Class II DHOase subfamily. In terms of assembly, homodimer. Requires Zn(2+) as cofactor.

It catalyses the reaction (S)-dihydroorotate + H2O = N-carbamoyl-L-aspartate + H(+). Its pathway is pyrimidine metabolism; UMP biosynthesis via de novo pathway; (S)-dihydroorotate from bicarbonate: step 3/3. Its function is as follows. Catalyzes the reversible cyclization of carbamoyl aspartate to dihydroorotate. This chain is Dihydroorotase, found in Yersinia pestis.